A 306-amino-acid polypeptide reads, in one-letter code: MEAISIFSDYQLQFFKRIGMKPKPIETLDDVSDVMKACSNVFSFENLDIVSNSCEPLNKDVLIKQVICNNQGGLCYKINTLLYHFLLEFGFKIHIIRGSVENQETHSDWNIPTGHMINIINFENRLYVVDVAFGCNLSLRPIPITDDGSEVVESCTGLYRVRKVENCVSGKYNYTHILEHRKLDSFLIESGKTWVTGYAFDPLLIVDNNNNNEKTTHQTLVQQLVIDDPTKEFSTKPLATKIVNDGSSFSIATLTANSFTLTDCKTGQKTKTNFDNDKSSFEQFNQHLISIFNLPPLKTIPPIFLN.

The active-site Acyl-thioester intermediate is Cys-75. Residues His-115 and Asp-130 contribute to the active site.

It belongs to the arylamine N-acetyltransferase family.

It catalyses the reaction an arylamine + acetyl-CoA = an N-acetylarylamine + CoA. This Dictyostelium discoideum (Social amoeba) protein is Probable arylamine N-acetyltransferase 3.